Here is a 675-residue protein sequence, read N- to C-terminus: Genome polyprotein (675 aa).

Residues 92–216 (WVYCDADGSQ…AIHPDHEHVL (125 aa)) enclose the RdRp catalytic domain. Over residues 390–424 (KNEAVDTGLNEKFKEKEKQKEKEKEKQKEKEKDDA) the composition is skewed to basic and acidic residues. The disordered stretch occupies residues 390-447 (KNEAVDTGLNEKFKEKEKQKEKEKEKQKEKEKDDASDGNDVSTSTKTGERDRDVNVGT).

The protein belongs to the potyviridae genome polyprotein family. In terms of processing, genome polyprotein of potyviruses undergoes post-translational proteolytic processing by the main proteinase NIa-pro resulting in the production of at least ten individual proteins. The P1 proteinase and the HC-pro cleave only their respective C-termini autocatalytically. 6K1 is essential for proper proteolytic separation of P3 from CI.

It is found in the virion. It carries out the reaction RNA(n) + a ribonucleoside 5'-triphosphate = RNA(n+1) + diphosphate. Functionally, an RNA-dependent RNA polymerase that plays an essential role in the virus replication. In terms of biological role, involved in aphid transmission, cell-to-cell and systemis movement, encapsidation of the viral RNA and in the regulation of viral RNA amplification. The chain is Genome polyprotein from Papaya ringspot virus (strain W).